The following is a 224-amino-acid chain: 7-cyano-7-deazaguanine synthase (224 aa).

9 to 19 (LSGGLDSATVL) lines the ATP pocket. Residues cysteine 189, cysteine 199, cysteine 202, and cysteine 205 each contribute to the Zn(2+) site.

Belongs to the QueC family. Requires Zn(2+) as cofactor.

The catalysed reaction is 7-carboxy-7-deazaguanine + NH4(+) + ATP = 7-cyano-7-deazaguanine + ADP + phosphate + H2O + H(+). It functions in the pathway purine metabolism; 7-cyano-7-deazaguanine biosynthesis. Its function is as follows. Catalyzes the ATP-dependent conversion of 7-carboxy-7-deazaguanine (CDG) to 7-cyano-7-deazaguanine (preQ(0)). The sequence is that of 7-cyano-7-deazaguanine synthase from Ralstonia nicotianae (strain ATCC BAA-1114 / GMI1000) (Ralstonia solanacearum).